A 635-amino-acid polypeptide reads, in one-letter code: Phosphatidylserine decarboxylase proenzyme 3 (635 aa).

Residues 1-42 (MGNGNSTETKESRRSKMRKKIQNFRSRRRLSRPGSGSVSGLA) are disordered. G2 carries the N-myristoyl glycine lipid modification. Basic residues predominate over residues 15–31 (SKMRKKIQNFRSRRRLS). The C2 domain occupies 22-147 (QNFRSRRRLS…VVQEPDSTCK (126 aa)). EF-hand domains follow at residues 180–210 (AKRI…FGNV) and 211–246 (VAAN…QQEQ). Positions 188, 190, 192, 194, 199, 224, 226, 228, and 235 each coordinate Ca(2+). Catalysis depends on charge relay system; for autoendoproteolytic cleavage activity residues D442, H498, and S586. S586 (schiff-base intermediate with substrate; via pyruvic acid; for decarboxylase activity) is an active-site residue. The residue at position 586 (S586) is a Pyruvic acid (Ser); by autocatalysis.

It belongs to the phosphatidylserine decarboxylase family. PSD-B subfamily. Eukaryotic type II sub-subfamily. In terms of assembly, heterodimer of a large membrane-associated beta subunit and a small pyruvoyl-containing alpha subunit. The cofactor is pyruvate. Is synthesized initially as an inactive proenzyme. Formation of the active enzyme involves a self-maturation process in which the active site pyruvoyl group is generated from an internal serine residue via an autocatalytic post-translational modification. Two non-identical subunits are generated from the proenzyme in this reaction, and the pyruvate is formed at the N-terminus of the alpha chain, which is derived from the carboxyl end of the proenzyme. The autoendoproteolytic cleavage occurs by a canonical serine protease mechanism, in which the side chain hydroxyl group of the serine supplies its oxygen atom to form the C-terminus of the beta chain, while the remainder of the serine residue undergoes an oxidative deamination to produce ammonia and the pyruvoyl prosthetic group on the alpha chain. During this reaction, the Ser that is part of the protease active site of the proenzyme becomes the pyruvoyl prosthetic group, which constitutes an essential element of the active site of the mature decarboxylase. Expressed in roots, leaves, stems and flowers.

Its subcellular location is the endoplasmic reticulum membrane. It catalyses the reaction a 1,2-diacyl-sn-glycero-3-phospho-L-serine + H(+) = a 1,2-diacyl-sn-glycero-3-phosphoethanolamine + CO2. The protein operates within phospholipid metabolism; phosphatidylethanolamine biosynthesis; phosphatidylethanolamine from CDP-diacylglycerol: step 2/2. Its function is as follows. Catalyzes the formation of phosphatidylethanolamine (PtdEtn) from phosphatidylserine (PtdSer). Plays a central role in phospholipid metabolism and in the interorganelle trafficking of phosphatidylserine. Contributes only to a minor proportion of PtdEtn production. The sequence is that of Phosphatidylserine decarboxylase proenzyme 3 (PSD3) from Arabidopsis thaliana (Mouse-ear cress).